The chain runs to 509 residues: Bifunctional purine biosynthesis protein PurH (509 aa).

One can recognise an MGS-like domain in the interval 1 to 144 (MKRALISVSD…KNYAAVTVVV (144 aa)).

It belongs to the PurH family.

The catalysed reaction is (6R)-10-formyltetrahydrofolate + 5-amino-1-(5-phospho-beta-D-ribosyl)imidazole-4-carboxamide = 5-formamido-1-(5-phospho-D-ribosyl)imidazole-4-carboxamide + (6S)-5,6,7,8-tetrahydrofolate. The enzyme catalyses IMP + H2O = 5-formamido-1-(5-phospho-D-ribosyl)imidazole-4-carboxamide. It functions in the pathway purine metabolism; IMP biosynthesis via de novo pathway; 5-formamido-1-(5-phospho-D-ribosyl)imidazole-4-carboxamide from 5-amino-1-(5-phospho-D-ribosyl)imidazole-4-carboxamide (10-formyl THF route): step 1/1. Its pathway is purine metabolism; IMP biosynthesis via de novo pathway; IMP from 5-formamido-1-(5-phospho-D-ribosyl)imidazole-4-carboxamide: step 1/1. This Listeria monocytogenes serotype 4b (strain CLIP80459) protein is Bifunctional purine biosynthesis protein PurH.